The following is a 355-amino-acid chain: Uroporphyrinogen decarboxylase (355 aa).

Residues 27 to 31 (RQAGR), Asp77, Tyr154, Thr209, and His327 contribute to the substrate site.

Belongs to the uroporphyrinogen decarboxylase family. As to quaternary structure, homodimer.

Its subcellular location is the cytoplasm. It carries out the reaction uroporphyrinogen III + 4 H(+) = coproporphyrinogen III + 4 CO2. It participates in porphyrin-containing compound metabolism; protoporphyrin-IX biosynthesis; coproporphyrinogen-III from 5-aminolevulinate: step 4/4. Functionally, catalyzes the decarboxylation of four acetate groups of uroporphyrinogen-III to yield coproporphyrinogen-III. This chain is Uroporphyrinogen decarboxylase, found in Aeromonas salmonicida (strain A449).